Here is a 529-residue protein sequence, read N- to C-terminus: Glucose-6-phosphate isomerase (529 aa).

The active-site Proton donor is Glu322. Active-site residues include His351 and Lys455.

The protein belongs to the GPI family.

It localises to the cytoplasm. The enzyme catalyses alpha-D-glucose 6-phosphate = beta-D-fructose 6-phosphate. Its pathway is carbohydrate biosynthesis; gluconeogenesis. It functions in the pathway carbohydrate degradation; glycolysis; D-glyceraldehyde 3-phosphate and glycerone phosphate from D-glucose: step 2/4. Its function is as follows. Catalyzes the reversible isomerization of glucose-6-phosphate to fructose-6-phosphate. This is Glucose-6-phosphate isomerase from Cyanothece sp. (strain PCC 7425 / ATCC 29141).